The following is a 460-amino-acid chain: Keratin, type I cytoskeletal 27 (460 aa).

A head region spans residues 1 to 83 (MSVRFSSASR…GNEHGLLSGN (83 aa)). The tract at residues 84 to 119 (EKVTMQNLNDRLASYLDNVRALEEANADLEQKIKGW) is coil 1A. An IF rod domain is found at 84–399 (EKVTMQNLND…RLIDGEDGSC (316 aa)). The linker 1 stretch occupies residues 120-141 (YEKFGPGSCRGLDHDYSRYFTV). The interval 142–233 (IDDLRNQIIS…KNHEEEMKAL (92 aa)) is coil 1B. A linker 12 region spans residues 234-256 (QCAAGGNVNVEMNAAPGVDLTVL). The tract at residues 257 to 395 (LNNMRAEYEA…ETYCRLIDGE (139 aa)) is coil 2. The tract at residues 396 to 460 (DGSCTKSKGY…NMKSEQRVPS (65 aa)) is tail. A disordered region spans residues 429–460 (DPRGKVPSSRVHTVEEKSTKVNNMKSEQRVPS). A compositionally biased stretch (polar residues) spans 448–460 (KVNNMKSEQRVPS).

It belongs to the intermediate filament family. In terms of assembly, heterotetramer of two type I and two type II keratins. Interacts with KRT6A to form filaments.

It is found in the cytoplasm. Its function is as follows. Essential for the proper assembly of type I and type II keratin protein complexes and formation of keratin intermediate filaments in the inner root sheath (irs). The sequence is that of Keratin, type I cytoskeletal 27 from Capra hircus (Goat).